The following is an 89-amino-acid chain: Small ribosomal subunit protein uS15 (89 aa).

Belongs to the universal ribosomal protein uS15 family. Part of the 30S ribosomal subunit. Forms a bridge to the 50S subunit in the 70S ribosome, contacting the 23S rRNA.

Its function is as follows. One of the primary rRNA binding proteins, it binds directly to 16S rRNA where it helps nucleate assembly of the platform of the 30S subunit by binding and bridging several RNA helices of the 16S rRNA. In terms of biological role, forms an intersubunit bridge (bridge B4) with the 23S rRNA of the 50S subunit in the ribosome. This Nocardia farcinica (strain IFM 10152) protein is Small ribosomal subunit protein uS15.